Consider the following 526-residue polypeptide: Bifunctional purine biosynthesis protein PurH (526 aa).

Positions 1 to 148 constitute an MGS-like domain; it reads MQRPIIIRRA…KNYSNVVVVV (148 aa).

It belongs to the PurH family.

The enzyme catalyses (6R)-10-formyltetrahydrofolate + 5-amino-1-(5-phospho-beta-D-ribosyl)imidazole-4-carboxamide = 5-formamido-1-(5-phospho-D-ribosyl)imidazole-4-carboxamide + (6S)-5,6,7,8-tetrahydrofolate. It carries out the reaction IMP + H2O = 5-formamido-1-(5-phospho-D-ribosyl)imidazole-4-carboxamide. It participates in purine metabolism; IMP biosynthesis via de novo pathway; 5-formamido-1-(5-phospho-D-ribosyl)imidazole-4-carboxamide from 5-amino-1-(5-phospho-D-ribosyl)imidazole-4-carboxamide (10-formyl THF route): step 1/1. Its pathway is purine metabolism; IMP biosynthesis via de novo pathway; IMP from 5-formamido-1-(5-phospho-D-ribosyl)imidazole-4-carboxamide: step 1/1. This Baumannia cicadellinicola subsp. Homalodisca coagulata protein is Bifunctional purine biosynthesis protein PurH.